The sequence spans 369 residues: Protein RecA (369 aa).

66–73 lines the ATP pocket; that stretch reads GPESSGKT. The disordered stretch occupies residues 328 to 369; that stretch reads GIDAESLEEKEDPEKVKEQRAKKAAPGEEKPAEPASPEKTDK. Residues 339-369 show a composition bias toward basic and acidic residues; it reads DPEKVKEQRAKKAAPGEEKPAEPASPEKTDK.

The protein belongs to the RecA family.

It localises to the cytoplasm. Its function is as follows. Can catalyze the hydrolysis of ATP in the presence of single-stranded DNA, the ATP-dependent uptake of single-stranded DNA by duplex DNA, and the ATP-dependent hybridization of homologous single-stranded DNAs. It interacts with LexA causing its activation and leading to its autocatalytic cleavage. This is Protein RecA from Lactobacillus delbrueckii subsp. bulgaricus (strain ATCC BAA-365 / Lb-18).